We begin with the raw amino-acid sequence, 399 residues long: Leu/Ile/Val-binding protein homolog 7 (399 aa).

A signal peptide spans 1 to 22 (MEKHLIALSVAALLAGAAPASA).

It belongs to the leucine-binding protein family.

In terms of biological role, component of an amino-acid transport system. The polypeptide is Leu/Ile/Val-binding protein homolog 7 (Brucella suis biovar 1 (strain 1330)).